We begin with the raw amino-acid sequence, 113 residues long: MVLGKRHGSLIKRTTSMKMITLDTPTIYDASQPSDHLTFHQHPHNPMVVMASNYDDFLKTCSLCNRSLCHHRDIYMYRGNNAFCSLECREKQIKLDEKKAKTGFVTSKKPIRI.

The FLZ-type zinc finger occupies 56–100; it reads DFLKTCSLCNRSLCHHRDIYMYRGNNAFCSLECREKQIKLDEKKA.

It belongs to the FLZ family. Interacts with KIN10 and KIN11 via its FLZ-type zinc finger domain. Interacts with KINB3 via its N-terminal part. Interacts with GEBP.

It localises to the nucleus. Its subcellular location is the cytoplasm. Functionally, may act as an adapter to facilitate the interaction of SnRK1 complex with effector proteins, conferring tissue- and stimulus-type specific differences in the SnRK1 regulation pathway. The chain is Protein INCREASED RESISTANCE TO MYZUS PERSICAE 1 from Arabidopsis thaliana (Mouse-ear cress).